Here is a 211-residue protein sequence, read N- to C-terminus: uncharacterized protein (211 aa).

The Cytoplasmic segment spans residues 1-33 (MQNGTEDKSNIPARSNDDVLPPLAVRLTMKVMR). The helical transmembrane segment at 34–54 (LIFIGKMFAYSFVPFPPFKLL) threads the bilayer. At 55–58 (TFDN) the chain is on the lumenal side. A helical membrane pass occupies residues 59-79 (TVGWFVAYSAIVSIWGFAVWM). Residues 80–116 (ERGYRHKINLLPPRCTKIRCSRCNTRIRSPNWFKYKN) are Cytoplasmic-facing. A helical membrane pass occupies residues 117–137 (WLYFFLLYVSLTTSNLIIQLA). Residues 138–162 (SFMTEMSRRGISVPGTKDPGKRDYL) lie on the Lumenal side of the membrane. A helical membrane pass occupies residues 163-183 (GLIIPMRFIGAFIHYMTANLF). Residues 184 to 211 (KEYYLHNGPLEKNDRPSTDEKTSENETL) lie on the Cytoplasmic side of the membrane.

The protein resides in the endoplasmic reticulum membrane. This is an uncharacterized protein from Saccharomyces cerevisiae (strain ATCC 204508 / S288c) (Baker's yeast).